A 360-amino-acid polypeptide reads, in one-letter code: Glucan endo-1,3-beta-glucosidase B (360 aa).

Residues 1–25 (MATSQIAIIVLLGLLVATNIHITEA) form the signal peptide. Q26 carries the pyrrolidone carboxylic acid modification. Catalysis depends on E120, which acts as the Proton donor. E265 acts as the Nucleophile in catalysis. Positions 341-360 (VSERVWDITNSTASSLTSEI) are cleaved as a propeptide — removed in mature form. N350 carries an N-linked (GlcNAc...) asparagine glycan.

This sequence belongs to the glycosyl hydrolase 17 family.

It is found in the vacuole. It catalyses the reaction Hydrolysis of (1-&gt;3)-beta-D-glucosidic linkages in (1-&gt;3)-beta-D-glucans.. Its function is as follows. Implicated in the defense of plants against pathogens. This is Glucan endo-1,3-beta-glucosidase B from Solanum lycopersicum (Tomato).